A 1521-amino-acid polypeptide reads, in one-letter code: Probable DNA topoisomerase 2 (1521 aa).

Acidic residues predominate over residues 1–10 (MSDSENDYSD). Residues 1–87 (MSDSENDYSD…DDKSSSSDNE (87 aa)) are disordered. Basic residues predominate over residues 36 to 48 (SKKKASATRKPAA). The segment covering 49–62 (KKATTTTTSTTKKS) has biased composition (low complexity). Residues Asn-163, Asn-192, 220–222 (SSH), and 233–240 (GRNGFGAK) each bind ATP. The interaction with DNA stretch occupies residues 412-414 (NKK). 446–448 (QTK) is an ATP binding site. The region spanning 527–640 (CTLILTEGDS…TLLRMPGFLV (114 aa)) is the Toprim domain. Mg(2+) contacts are provided by Glu-533, Asp-609, and Asp-611. Residues 771 to 1273 (IPNIVDGLKT…PIQEIYKRDL (503 aa)) enclose the Topo IIA-type catalytic domain. The active-site O-(5'-phospho-DNA)-tyrosine intermediate is Tyr-861. Residues 1007–1047 (GTRKKKKEEKEKKAASRKGTKAKPTTTKRSKRVDDDDDNEK) are disordered. Over residues 1021–1037 (ASRKGTKAKPTTTKRSK) the composition is skewed to basic residues. The segment at 1085-1094 (KLVSTINETN) is interaction with DNA. Disordered regions lie at residues 1192–1222 (KIKK…EQDD) and 1335–1521 (IPTT…SDSD). The segment covering 1201–1222 (DEEDAAISSDEEKDGAQEEQDD) has biased composition (acidic residues). Low complexity predominate over residues 1354–1368 (TTSTSTSTTTSSNTK). Acidic residues predominate over residues 1422–1438 (LSDESDQESDQESDQGS). Over residues 1454 to 1467 (PTTIATKKATTSKS) the composition is skewed to low complexity. Over residues 1468–1480 (KVIDDKSSDDEVI) the composition is skewed to basic and acidic residues. Residues 1503 to 1521 (SDSDDDDLYDNEESSSDSD) show a composition bias toward acidic residues.

This sequence belongs to the type II topoisomerase family. Homodimer. Mg(2+) serves as cofactor. The cofactor is Mn(2+). It depends on Ca(2+) as a cofactor.

The protein localises to the nucleus. The catalysed reaction is ATP-dependent breakage, passage and rejoining of double-stranded DNA.. Its function is as follows. Control of topological states of DNA by transient breakage and subsequent rejoining of DNA strands. Topoisomerase II makes double-strand breaks. This is Probable DNA topoisomerase 2 (top2) from Dictyostelium discoideum (Social amoeba).